Reading from the N-terminus, the 255-residue chain is Small ribosomal subunit protein eS1 (255 aa).

Basic residues predominate over residues 1 to 18; that stretch reads MAVGKNKRLSKGKKGLKK. The interval 1-28 is disordered; sequence MAVGKNKRLSKGKKGLKKRTQDPFSRKD. An N-acetylalanine; partial modification is found at Ala-2. Residues 19 to 28 are compositionally biased toward basic and acidic residues; it reads RTQDPFSRKD.

It belongs to the eukaryotic ribosomal protein eS1 family. As to quaternary structure, component of the small ribosomal subunit. Mature ribosomes consist of a small (40S) and a large (60S) subunit. The 40S subunit contains about 33 different proteins and 1 molecule of RNA (18S). The 60S subunit contains about 49 different proteins and 3 molecules of RNA (25S, 5.8S and 5S).

Its subcellular location is the cytoplasm. The sequence is that of Small ribosomal subunit protein eS1 from Paracoccidioides lutzii (strain ATCC MYA-826 / Pb01) (Paracoccidioides brasiliensis).